Reading from the N-terminus, the 283-residue chain is 4-diphosphocytidyl-2-C-methyl-D-erythritol kinase (283 aa).

Lys10 is an active-site residue. 99–109 (PMGGGLGGGSS) serves as a coordination point for ATP. Asp141 is an active-site residue.

It belongs to the GHMP kinase family. IspE subfamily. As to quaternary structure, homodimer.

It catalyses the reaction 4-CDP-2-C-methyl-D-erythritol + ATP = 4-CDP-2-C-methyl-D-erythritol 2-phosphate + ADP + H(+). Its pathway is isoprenoid biosynthesis; isopentenyl diphosphate biosynthesis via DXP pathway; isopentenyl diphosphate from 1-deoxy-D-xylulose 5-phosphate: step 3/6. Its function is as follows. Catalyzes the phosphorylation of the position 2 hydroxy group of 4-diphosphocytidyl-2C-methyl-D-erythritol. This is 4-diphosphocytidyl-2-C-methyl-D-erythritol kinase from Shigella boydii serotype 18 (strain CDC 3083-94 / BS512).